A 377-amino-acid chain; its full sequence is Succinyl-diaminopimelate desuccinylase (377 aa).

His-66 provides a ligand contact to Zn(2+). The active site involves Asp-68. Asp-99 contributes to the Zn(2+) binding site. Glu-133 serves as the catalytic Proton acceptor. Residues Glu-134, Glu-162, and His-348 each contribute to the Zn(2+) site.

The protein belongs to the peptidase M20A family. DapE subfamily. Homodimer. It depends on Zn(2+) as a cofactor. Co(2+) serves as cofactor.

It catalyses the reaction N-succinyl-(2S,6S)-2,6-diaminopimelate + H2O = (2S,6S)-2,6-diaminopimelate + succinate. It functions in the pathway amino-acid biosynthesis; L-lysine biosynthesis via DAP pathway; LL-2,6-diaminopimelate from (S)-tetrahydrodipicolinate (succinylase route): step 3/3. Functionally, catalyzes the hydrolysis of N-succinyl-L,L-diaminopimelic acid (SDAP), forming succinate and LL-2,6-diaminopimelate (DAP), an intermediate involved in the bacterial biosynthesis of lysine and meso-diaminopimelic acid, an essential component of bacterial cell walls. This chain is Succinyl-diaminopimelate desuccinylase, found in Xylella fastidiosa (strain M12).